The following is a 223-amino-acid chain: Neurotrophic factor BDNF precursor form (223 aa).

Residues 1-5 (SCMKA) form the signal peptide. A propeptide spanning residues 6-114 (APMKEVGVRG…AANMSXRVRR (109 aa)) is cleaved from the precursor. N-linked (GlcNAc...) asparagine glycosylation occurs at Asn-107. 2 disulfides stabilise this stretch: Cys-127/Cys-194 and Cys-172/Cys-223.

It belongs to the NGF-beta family.

Its subcellular location is the secreted. Promotes the survival of neuronal populations that are all located either in the central nervous system or directly connected to it. In Eryx jayakari (Arabian sand boa), this protein is Neurotrophic factor BDNF precursor form (BDNF).